The primary structure comprises 329 residues: Protein phosphatase 1 regulatory subunit 42 (329 aa).

LRR repeat units lie at residues Lys30–Arg51, Asn52–Ser73, Asn74–His95, Lys96–Lys117, Ser118–Pro139, Thr148–Arg169, and Lys170–Phe191. Positions Asn205 to Trp243 constitute an LRRCT domain. Positions Ser268–Ile329 are disordered. Polar residues predominate over residues Gly318–Ile329.

Its subcellular location is the cytoplasm. The protein resides in the cytoskeleton. It localises to the microtubule organizing center. It is found in the centrosome. May regulate phosphatase activity of protein phosphatase 1 (PP1) complexes. The chain is Protein phosphatase 1 regulatory subunit 42 (ppp1r42) from Danio rerio (Zebrafish).